The following is a 492-amino-acid chain: Cytochrome P450 2A12 (492 aa).

Cysteine 437 provides a ligand contact to heme.

The protein belongs to the cytochrome P450 family. Requires heme as cofactor. Liver.

The protein resides in the endoplasmic reticulum membrane. It localises to the microsome membrane. The catalysed reaction is an organic molecule + reduced [NADPH--hemoprotein reductase] + O2 = an alcohol + oxidized [NADPH--hemoprotein reductase] + H2O + H(+). In terms of biological role, highly active in the 7-alpha-hydroxylation of testosterone. The chain is Cytochrome P450 2A12 (Cyp2a12) from Mus musculus (Mouse).